A 411-amino-acid chain; its full sequence is Na(+)-translocating NADH-quinone reductase subunit F (411 aa).

A helical transmembrane segment spans residues 5-25; that stretch reads VILALGIAAFTVIVLVLVAII. One can recognise a 2Fe-2S ferredoxin-type domain in the interval 36-130; sequence GDITIDINDD…NMEVELPEEI (95 aa). Residues Cys73, Cys79, Cys82, and Cys114 each coordinate [2Fe-2S] cluster. The region spanning 133–273 is the FAD-binding FR-type domain; that stretch reads VKKWECTVIS…SGPFGEFFAK (141 aa).

The protein belongs to the NqrF family. In terms of assembly, composed of six subunits; NqrA, NqrB, NqrC, NqrD, NqrE and NqrF. Requires [2Fe-2S] cluster as cofactor. It depends on FAD as a cofactor.

The protein localises to the cell inner membrane. It carries out the reaction a ubiquinone + n Na(+)(in) + NADH + H(+) = a ubiquinol + n Na(+)(out) + NAD(+). In terms of biological role, NQR complex catalyzes the reduction of ubiquinone-1 to ubiquinol by two successive reactions, coupled with the transport of Na(+) ions from the cytoplasm to the periplasm. The first step is catalyzed by NqrF, which accepts electrons from NADH and reduces ubiquinone-1 to ubisemiquinone by a one-electron transfer pathway. The sequence is that of Na(+)-translocating NADH-quinone reductase subunit F from Haemophilus influenzae (strain 86-028NP).